A 525-amino-acid chain; its full sequence is MAEPVDLDVAGPVGRPVLVVDFGAQYAQLIARRVREARVFSEVIPHTTSIEEIKARDPLALVLSGGPASVYAPGAPQLDPALFDLGLPVFGICYGFQVMAQALGGTVAHTGTSEYGRTELKVLGGDLHSDLPDIQPVWMSHGDAVTAAPDGFEVVASSAGAAVAAFENRERRLAGVQYHPEVMHTPHGQQILGRFLHDFAGIGARWTPANIANALIEQVRTQIGDGHAICGLSGGVDSAVAAALVQRAIGDRLTCVFVDHGLLRAGERAQVERDFVAATKANLVTVDVADTFLAALSGVTDPEGKRKIIGRQFIRAFEGAVRDVLDGRDIEFLVQGTLYPDVVESGGGSGTANIKSHHNVGGLPDDLKFALVEPLRLLFKDEVRAVGRELGLPEEIVARQPFPGPGLGIRIVGEVTGQRLDTLRRADSIAREELTAAGLDNQIWQCPVVLLADVRSVGVQGDNRTYGHPIVLRPVSSEDAMTADWTRVPFEVLERISTRITNEVPEVNRVVLDVTSKPPGTIEWE.

The 190-residue stretch at 16-205 folds into the Glutamine amidotransferase type-1 domain; that stretch reads PVLVVDFGAQ…LHDFAGIGAR (190 aa). The active-site Nucleophile is the cysteine 93. Residues histidine 179 and glutamate 181 contribute to the active site. Residues 206-399 form the GMPS ATP-PPase domain; it reads WTPANIANAL…LGLPEEIVAR (194 aa). 233 to 239 lines the ATP pocket; sequence SGGVDSA.

Homodimer.

The enzyme catalyses XMP + L-glutamine + ATP + H2O = GMP + L-glutamate + AMP + diphosphate + 2 H(+). It functions in the pathway purine metabolism; GMP biosynthesis; GMP from XMP (L-Gln route): step 1/1. Its function is as follows. Catalyzes the synthesis of GMP from XMP. This is GMP synthase [glutamine-hydrolyzing] from Mycobacterium marinum (strain ATCC BAA-535 / M).